Here is a 2099-residue protein sequence, read N- to C-terminus: Dedicator of cytokinesis protein 8 (2099 aa).

Phosphoserine is present on residues S20, S139, and S451. The C2 DOCK-type domain maps to 560 to 729; it reads RNLLYVYPQR…GVFNIEVQAV (170 aa). 4 positions are modified to phosphoserine: S904, S936, S1145, and S1243. In terms of domain architecture, DOCKER spans 1632-2066; that stretch reads KSYQASPDLR…LRPMIERKIP (435 aa). Position 2087 is a phosphoserine (S2087).

It belongs to the DOCK family. As to quaternary structure, interacts (via DOCKER domain) with GTPase CDC42; the interaction activates CDC42 by exchanging GDP for GTP. The unphosphorylated form interacts (via DOCKER domain) with LRCH1 (via LRR repeats); the interaction prevents the association between DOCK8 and CDC42. Interacts with CCDC88B. In terms of processing, in response to chemokine CXCL12/SDF-1-alpha stimulation, phosphorylated by PRKCA/PKC-alpha which promotes DOCK8 dissociation from LRCH1. Expressed in peripheral blood mononuclear cells (PBMCs).

It is found in the cytoplasm. It localises to the cell membrane. The protein resides in the cell projection. Its subcellular location is the lamellipodium membrane. Functionally, guanine nucleotide exchange factor (GEF) which specifically activates small GTPase CDC42 by exchanging bound GDP for free GTP. During immune responses, required for interstitial dendritic cell (DC) migration by locally activating CDC42 at the leading edge membrane of DC. Required for CD4(+) T-cell migration in response to chemokine stimulation by promoting CDC42 activation at T cell leading edge membrane. Is involved in NK cell cytotoxicity by controlling polarization of microtubule-organizing center (MTOC), and possibly regulating CCDC88B-mediated lytic granule transport to MTOC during cell killing. This chain is Dedicator of cytokinesis protein 8 (DOCK8), found in Homo sapiens (Human).